Reading from the N-terminus, the 156-residue chain is RNA polymerase sigma factor SigS (156 aa).

Positions 29–44 (EYYQLLLIKMWQLSQI) match the Polymerase core binding motif. The H-T-H motif DNA-binding region spans 126–145 (QYEIADIMSLSTSTIKLIKA).

Belongs to the sigma-70 factor family.

Functionally, sigma factors are initiation factors that promote the attachment of RNA polymerase to specific initiation sites and are then released. Sigma-S contributes to the protection against external stress, thus playing a role in cellular fitness and survival. The chain is RNA polymerase sigma factor SigS (sigS) from Staphylococcus aureus (strain MRSA252).